Here is a 134-residue protein sequence, read N- to C-terminus: MDPVIIAFCCYQUGYGAADLAGTSRMQYPATVRIVRLPCTGKFDITYALRAFQKGADAVMVVGUKKGECAYETGNLKAEERVRFAKQLLDELGIGGDRIDMFFMSAAEADKFVSAVNEMTARVEKLGPNPLKAQ.

Residues selenocysteine 13 and selenocysteine 64 are each a non-standard amino acid (selenocysteine).

It belongs to the MvhD/VhuD family. In terms of assembly, the F420-non-reducing hydrogenase vhu is composed of four subunits; VhuA, VhuD, VhuG and VhuU. The cofactor is [2Fe-2S] cluster.

The protein is F420-non-reducing hydrogenase vhu iron-sulfur subunit D (vhuD) of Methanocaldococcus jannaschii (strain ATCC 43067 / DSM 2661 / JAL-1 / JCM 10045 / NBRC 100440) (Methanococcus jannaschii).